Consider the following 416-residue polypeptide: 46 kDa surface antigen (416 aa).

The signal sequence occupies residues 1-27 (MLRKKFLYSSAIYATSLASIIAFVAAG). A lipid anchor (N-palmitoyl cysteine) is attached at Cys-28. A lipid anchor (S-diacylglycerol cysteine) is attached at Cys-28.

The protein resides in the cell membrane. The chain is 46 kDa surface antigen (p46) from Mesomycoplasma hyopneumoniae (strain 232) (Mycoplasma hyopneumoniae).